The following is a 358-amino-acid chain: Heat-inducible transcription repressor HrcA (358 aa).

Belongs to the HrcA family.

Its function is as follows. Negative regulator of class I heat shock genes (grpE-dnaK-dnaJ and groELS operons). Prevents heat-shock induction of these operons. The sequence is that of Heat-inducible transcription repressor HrcA from Caulobacter vibrioides (strain NA1000 / CB15N) (Caulobacter crescentus).